The sequence spans 228 residues: MVPSFVVYSSWVNGRQRYIRQAFASILFYIIRDTTLSFPSHTTMSTKPETDLQTVLDSEIKEWHFHIYFHQNNAAEHQAALELRDAVLRLRQDGAFVAVPLFRVNMDPMGPHPVGSYEIWVPSETFASVFSYLCMNRGRLSILVHPLTREELRDHEIRNAWIGPSFPLNLANLPIKSDEIPLQYPSLKLGYSSTAHKMSLEERRKLGDDIEAVLRGEKEAARAPHRDA.

As to quaternary structure, homodimer. As to expression, expressed at high level in coloured cap tissue and at least 10 times lower level in the stipe.

It is found in the cytoplasm. The protein operates within pigment biosynthesis; betalain biosynthesis. Extradiol dioxygenase that opens up the cyclic ring of DOPA between carbons 4 and 5 thus producing an unstable seco-DOPA that rearranges non-enzymatically to betalamic acid. Can also catalyze the formation of muscaflavin (a pigment found in the hygrocybe mushrooms family and of some amanita species only) by a 2,3-extradiol cleavage of DOPA. In Amanita muscaria (Fly agaric), this protein is DOPA 4,5-dioxygenase (DODA).